A 103-amino-acid polypeptide reads, in one-letter code: Large ribosomal subunit protein bL21 (103 aa).

Belongs to the bacterial ribosomal protein bL21 family. As to quaternary structure, part of the 50S ribosomal subunit. Contacts protein L20.

In terms of biological role, this protein binds to 23S rRNA in the presence of protein L20. The protein is Large ribosomal subunit protein bL21 of Treponema denticola (strain ATCC 35405 / DSM 14222 / CIP 103919 / JCM 8153 / KCTC 15104).